The primary structure comprises 328 residues: dTDP-4-dehydrorhamnose 3,5-epimerase (328 aa).

Substrate contacts are provided by residues R23, E28, 46–48 (QEN), and R58. The active-site Proton acceptor is H61. The substrate site is built by K70 and H117. Residue Y130 is the Proton donor of the active site. Substrate is bound by residues E141 and K166.

The protein belongs to the dTDP-4-dehydrorhamnose 3,5-epimerase family. Homodimer.

It carries out the reaction dTDP-4-dehydro-6-deoxy-alpha-D-glucose = dTDP-4-dehydro-beta-L-rhamnose. It functions in the pathway carbohydrate biosynthesis; dTDP-L-rhamnose biosynthesis. The protein operates within bacterial outer membrane biogenesis; LPS O-antigen biosynthesis. Its function is as follows. Catalyzes the epimerization of the C3' and C5'positions of dTDP-6-deoxy-D-xylo-4-hexulose, forming dTDP-6-deoxy-L-lyxo-4-hexulose. The protein is dTDP-4-dehydrorhamnose 3,5-epimerase (rfbC) of Neisseria gonorrhoeae.